Reading from the N-terminus, the 1061-residue chain is Protein pid-5 (1061 aa).

This sequence belongs to the peptidase M24B family. In terms of assembly, may interact with pid-2, app-1 and prmt-5.

It localises to the cytoplasm. It is found in the perinuclear region. Its subcellular location is the P-body. Together with pid-4, it is involved in gene silencing mediated by a class of 21 nucleotide PIWI-interacting RNAs (piRNAs) that possess a uracil residue at the 5'-end (also called 21U-RNAs) and guide the Piwi protein prg-1 to its DNA targets for silencing. Together with pid-4, it is required for the biogenesis of secondary and tertiary 22G-siRNAs. Specifically, promotes the production of 22G-siRNAs from the 5' end of target mRNAs. Together with pid-4, plays a role in small RNA-directed transgenerational epigenetic inheritance (also called RNAe) over several generations and germline immortality. Together with pid-4, plays a role in the formation of liquid-like condensates in the cytoplasm called Z granules. The chain is Protein pid-5 from Caenorhabditis elegans.